Consider the following 334-residue polypeptide: Transmembrane protein 41 homolog (334 aa).

Asn-43 is a glycosylation site (N-linked (GlcNAc...) asparagine). Residues 47–79 (KNKNNNIDNKKNSNNNNNNNNNNNNKNSISNNN) form a disordered region. A glycan (N-linked (GlcNAc...) asparagine) is linked at Asn-83. Helical transmembrane passes span 97–117 (LPLW…VFLF), 156–176 (FIVI…SIPG), 192–214 (VGFP…ISYY), 246–266 (IVFL…ASPL), 269–289 (VPIH…TFLA), and 305–325 (IFDL…ILPT).

The protein belongs to the TMEM41 family.

Its subcellular location is the membrane. This chain is Transmembrane protein 41 homolog, found in Dictyostelium discoideum (Social amoeba).